We begin with the raw amino-acid sequence, 310 residues long: Methionyl-tRNA formyltransferase (310 aa).

110–113 (SLLP) serves as a coordination point for (6S)-5,6,7,8-tetrahydrofolate.

This sequence belongs to the Fmt family.

The catalysed reaction is L-methionyl-tRNA(fMet) + (6R)-10-formyltetrahydrofolate = N-formyl-L-methionyl-tRNA(fMet) + (6S)-5,6,7,8-tetrahydrofolate + H(+). Its function is as follows. Attaches a formyl group to the free amino group of methionyl-tRNA(fMet). The formyl group appears to play a dual role in the initiator identity of N-formylmethionyl-tRNA by promoting its recognition by IF2 and preventing the misappropriation of this tRNA by the elongation apparatus. The chain is Methionyl-tRNA formyltransferase from Clostridium acetobutylicum (strain ATCC 824 / DSM 792 / JCM 1419 / IAM 19013 / LMG 5710 / NBRC 13948 / NRRL B-527 / VKM B-1787 / 2291 / W).